Consider the following 344-residue polypeptide: DnaJ homolog subfamily C member 25 (344 aa).

The chain crosses the membrane as a helical span at residues 5-25 (WVLLVALSVLFLSGRAGALTE). Positions 33 to 108 (VCYDVLGVSR…ETRKDYDYML (76 aa)) constitute a J domain. 2 consecutive transmembrane segments (helical) span residues 134–154 (IVIL…WWSS) and 228–248 (ILLF…SWYV).

It belongs to the DNAJC25 family.

Its subcellular location is the membrane. This Xenopus laevis (African clawed frog) protein is DnaJ homolog subfamily C member 25 (dnajc25).